Reading from the N-terminus, the 157-residue chain is Crossover junction endodeoxyribonuclease RuvC (157 aa).

Catalysis depends on residues Asp7, Glu70, and Asp142. Mg(2+)-binding residues include Asp7, Glu70, and Asp142.

The protein belongs to the RuvC family. As to quaternary structure, homodimer which binds Holliday junction (HJ) DNA. The HJ becomes 2-fold symmetrical on binding to RuvC with unstacked arms; it has a different conformation from HJ DNA in complex with RuvA. In the full resolvosome a probable DNA-RuvA(4)-RuvB(12)-RuvC(2) complex forms which resolves the HJ. The cofactor is Mg(2+).

Its subcellular location is the cytoplasm. The catalysed reaction is Endonucleolytic cleavage at a junction such as a reciprocal single-stranded crossover between two homologous DNA duplexes (Holliday junction).. Functionally, the RuvA-RuvB-RuvC complex processes Holliday junction (HJ) DNA during genetic recombination and DNA repair. Endonuclease that resolves HJ intermediates. Cleaves cruciform DNA by making single-stranded nicks across the HJ at symmetrical positions within the homologous arms, yielding a 5'-phosphate and a 3'-hydroxyl group; requires a central core of homology in the junction. The consensus cleavage sequence is 5'-(A/T)TT(C/G)-3'. Cleavage occurs on the 3'-side of the TT dinucleotide at the point of strand exchange. HJ branch migration catalyzed by RuvA-RuvB allows RuvC to scan DNA until it finds its consensus sequence, where it cleaves and resolves the cruciform DNA. This chain is Crossover junction endodeoxyribonuclease RuvC, found in Synechococcus sp. (strain RCC307).